The chain runs to 407 residues: Peptidase T (407 aa).

His81 serves as a coordination point for Zn(2+). Asp83 is an active-site residue. Asp142 provides a ligand contact to Zn(2+). Glu176 serves as the catalytic Proton acceptor. The Zn(2+) site is built by Glu177, Asp199, and His381.

It belongs to the peptidase M20B family. Zn(2+) is required as a cofactor.

The protein resides in the cytoplasm. The enzyme catalyses Release of the N-terminal residue from a tripeptide.. Cleaves the N-terminal amino acid of tripeptides. This Streptococcus pneumoniae (strain Taiwan19F-14) protein is Peptidase T.